The sequence spans 854 residues: Protein ROOT HAIR DEFECTIVE 3 homolog 1 (854 aa).

At 1–680 the chain is on the cytoplasmic side; sequence MDEAAAAEAV…QAHKRGNGRL (680 aa). The GB1/RHD3-type G domain maps to 37–252; that stretch reads GLSYAVVSIM…IAPGGLAGDR (216 aa). 47-54 contributes to the GTP binding site; that stretch reads GPQSSGKS. Residues 217-242 adopt a coiled-coil conformation; the sequence is ALPSFEEKEEQFREQVQQLRQRFSNS. Residues 681-701 traverse the membrane as a helical segment; sequence PPPWAMVAIAVLGFNEIMTLL. Residues 702-704 are Lumenal-facing; the sequence is RNP. The chain crosses the membrane as a helical span at residues 705–725; the sequence is IYLFLLFVGYLLVKALAVQLD. Over 726–854 the chain is Cytoplasmic; sequence INREFQNGVV…NESNNAYSIV (129 aa). 2 stretches are compositionally biased toward low complexity: residues 758–781 and 814–828; these read TEQQ…QQQP and VSPS…VTSP. The disordered stretch occupies residues 758-854; that stretch reads TEQQQQQGHH…NESNNAYSIV (97 aa). Residues 842-854 are compositionally biased toward polar residues; it reads QPDNESNNAYSIV.

It belongs to the TRAFAC class dynamin-like GTPase superfamily. GB1/RHD3 GTPase family. RHD3 subfamily.

The protein resides in the endoplasmic reticulum membrane. Its function is as follows. Probable GTP-binding protein that may be involved in cell development. The protein is Protein ROOT HAIR DEFECTIVE 3 homolog 1 of Oryza sativa subsp. japonica (Rice).